The chain runs to 418 residues: Tyrosine--tRNA ligase (418 aa).

Tyr-34 contacts L-tyrosine. The 'HIGH' region motif lies at 39–48 (PTADSLHLGH). Positions 169 and 173 each coordinate L-tyrosine. A 'KMSKS' region motif is present at residues 229–233 (KFGKS). Lys-232 is a binding site for ATP. The S4 RNA-binding domain occupies 352–418 (LNIVDMLVTA…GKKKYAVLTY (67 aa)).

Belongs to the class-I aminoacyl-tRNA synthetase family. TyrS type 1 subfamily. As to quaternary structure, homodimer.

It is found in the cytoplasm. It catalyses the reaction tRNA(Tyr) + L-tyrosine + ATP = L-tyrosyl-tRNA(Tyr) + AMP + diphosphate + H(+). Its function is as follows. Catalyzes the attachment of tyrosine to tRNA(Tyr) in a two-step reaction: tyrosine is first activated by ATP to form Tyr-AMP and then transferred to the acceptor end of tRNA(Tyr). The protein is Tyrosine--tRNA ligase of Streptococcus equi subsp. zooepidemicus (strain H70).